A 129-amino-acid chain; its full sequence is Glycine cleavage system H protein (129 aa).

The Lipoyl-binding domain occupies 23 to 104 (SVTVGITHHA…AYTAWLFKIK (82 aa)). Lys64 carries the N6-lipoyllysine modification.

Belongs to the GcvH family. The glycine cleavage system is composed of four proteins: P, T, L and H. (R)-lipoate is required as a cofactor.

The glycine cleavage system catalyzes the degradation of glycine. The H protein shuttles the methylamine group of glycine from the P protein to the T protein. The sequence is that of Glycine cleavage system H protein from Thiobacillus denitrificans (strain ATCC 25259 / T1).